The primary structure comprises 445 residues: Response regulator protein PilR (445 aa).

The Response regulatory domain maps to 5 to 119 (KALIVDDEPD…RLRELVATAL (115 aa)). 4-aspartylphosphate occurs at positions 11 and 54. The region spanning 135–364 (LLGESPPMRA…LENMLERAYT (230 aa)) is the Sigma-54 factor interaction domain. ATP contacts are provided by residues 163–170 (GESGSGKE) and 226–235 (ASGGTLFLDE). A DNA-binding region (H-T-H motif) is located at residues 418–437 (RWNRTAAAQRLGLTFRSMRY).

In terms of processing, phosphorylated by PilS.

The protein localises to the cytoplasm. Member of the two-component regulatory system PilS/PilR that regulates the expression of multiple genes including the type IV pilus (T4P) major subunit PilA. Thereby, plays a major role in the regulation of multiple motility pathways. Upon appropriate environmental signals, the histidine kinase PilS transfers the phosphoryl group onto PilR. In turn, PilR functions as a transcriptional activator by direct binding to a cis-acting sequence upstream of the pilin gene promoter leading to its activation. In Pseudomonas aeruginosa (strain ATCC 15692 / DSM 22644 / CIP 104116 / JCM 14847 / LMG 12228 / 1C / PRS 101 / PAO1), this protein is Response regulator protein PilR (pilR).